The primary structure comprises 115 residues: MEFLRATASREVDVNSGWGYGSGVERGFLCEGDVRACLVPASHFVRAGTAPGTTPGTAAACLFVPPYVLGVTPAGTLPFGLPSQSVLGGLRLAPVHASSLLEGLGATIFFRCNAP.

This is an uncharacterized protein from Treponema pallidum (strain Nichols).